Here is a 953-residue protein sequence, read N- to C-terminus: MDYKKTLNLPDTSFPMRGDLAKREPGWVQQWEENRVYQAIRAASKGRPLFILHDGPPYANGDIHIGHAVNKILKDIIVKSRSMAGYDAPYVPGWDCHGMPIEIQVEKKFGKNLPVTEVHAKARAYALEQLDRQRQDFKRLGVLGDWDNPYLTMNFSNEADEIRVLARILEKGYVFRGLKPVNWCFDCGSALAEAEVEYADRVDPAIDVAFPFTDKAALAGAFGLDSVDDGAIVIWTTTPWTIPSNQALNVHPEIEYALVRVSPTPVHGPLVLIAKERVEACLKTWGLEGEIIATAPGQALDGLRFAHPLARAAEGYDRTSPIYLGDYVTLDTGTGVVHSAPAYGIEDFVSCKNHGLADADILSPVMGDGKYIATLPLFGGLSIWDANPKIVEALKLAGSLMHVQKLSHSYMHCWRHKSPVIYRATSQWFAGMDVTPEGGGQTLRESALAGIEATTFYPAWGRARLQAMIANRPDWTLSRQRQWGVPMAFFVHKETGALHPRTVELLEEVAKRVEKSGIEAWQSLDPRELLGDEADSYEKNRDTLDVWFDSGSTHATVLGGKDHALHGSHGEQLAWPADLYLEGSDQHRGWFHSSLLTGCMLYGQPPYKGLLTHGFVVDGQGRKMSKSVGNVIAPQKVSDSLGAEILRLWVASTDYSGELSISDEILKRVVEGYRRIRNTLRFLLANVADFDGVNQAVPYGDLLEIDRYALVMTAQMQAEVQAHYQSYDFHPAVSRLQTFCSEDLGAFYLDILKDRLYTNAPGSHARRSAQTALLDITQTLVKLMAPILSFTAEEAWKVLADSALKHQADAARLTIFTEVYHTLPPYADADALAGRWGRLRAIRADVLRKLEDVRGEGLIGSSLQAEVDIYADGEDLALLSALGDDLRFVLIVSRATVHARAGELAIEIAPSAHKKCERCWHWRADVGQDADHPEICGRCVSNLFGAGESRAKA.

The 'HIGH' region signature appears at 57–67; the sequence is PYANGDIHIGH. Residue Glu-582 participates in L-isoleucyl-5'-AMP binding. The 'KMSKS' region motif lies at 623–627; that stretch reads KMSKS. Residue Lys-626 coordinates ATP. Residues Cys-916, Cys-919, Cys-936, and Cys-939 each contribute to the Zn(2+) site.

Belongs to the class-I aminoacyl-tRNA synthetase family. IleS type 1 subfamily. Monomer. The cofactor is Zn(2+).

The protein localises to the cytoplasm. It catalyses the reaction tRNA(Ile) + L-isoleucine + ATP = L-isoleucyl-tRNA(Ile) + AMP + diphosphate. Its function is as follows. Catalyzes the attachment of isoleucine to tRNA(Ile). As IleRS can inadvertently accommodate and process structurally similar amino acids such as valine, to avoid such errors it has two additional distinct tRNA(Ile)-dependent editing activities. One activity is designated as 'pretransfer' editing and involves the hydrolysis of activated Val-AMP. The other activity is designated 'posttransfer' editing and involves deacylation of mischarged Val-tRNA(Ile). This chain is Isoleucine--tRNA ligase, found in Bordetella avium (strain 197N).